Consider the following 38-residue polypeptide: Large ribosomal subunit protein bL36 (38 aa).

It belongs to the bacterial ribosomal protein bL36 family.

The sequence is that of Large ribosomal subunit protein bL36 from Enterococcus faecalis (strain ATCC 700802 / V583).